The following is a 24-amino-acid chain: Poly-His-poly-Gly peptide 1 (24 aa).

The segment covering Glu-1 to Gly-13 has biased composition (basic residues). Residues Glu-1–Gly-24 form a disordered region. A compositionally biased stretch (gly residues) spans Val-14–Gly-24.

Expressed by the venom gland.

The protein localises to the secreted. Its function is as follows. May serve as a metalloproteinase inhibitor during glandular storage. Their inhibition may be instantly disengaged, by dilution or physiochemical change, when venom is injected into tissue of the victim. The chain is Poly-His-poly-Gly peptide 1 from Atheris chlorechis (Western bush viper).